A 202-amino-acid polypeptide reads, in one-letter code: MGIQLIVFLGNPGAEYEETRHNAAWLLLTYLFPSIVLPWRCGCRGSIARIEGFEGSSEEVWLLKPLTYMNRSGKSVGAACAFLQTDAKQLLVVHDELELPFGVVSLKQGGGLGGHNGLRSIKEVLGTADFWRLRIGIGRPPSESVNIAQYVLSAFYPAEMAAFPKLGRATRDLLCQLVVTDQAATVTLLSAWRKKRLLSLCE.

A tRNA-binding site is contributed by Y16. Residue H21 is the Proton acceptor of the active site. TRNA contacts are provided by Y68, N70, and N116.

This sequence belongs to the PTH family. As to quaternary structure, monomer.

It is found in the cytoplasm. The enzyme catalyses an N-acyl-L-alpha-aminoacyl-tRNA + H2O = an N-acyl-L-amino acid + a tRNA + H(+). Its function is as follows. Hydrolyzes ribosome-free peptidyl-tRNAs (with 1 or more amino acids incorporated), which drop off the ribosome during protein synthesis, or as a result of ribosome stalling. Catalyzes the release of premature peptidyl moieties from peptidyl-tRNA molecules trapped in stalled 50S ribosomal subunits, and thus maintains levels of free tRNAs and 50S ribosomes. The polypeptide is Peptidyl-tRNA hydrolase (Treponema pallidum (strain Nichols)).